The following is a 102-amino-acid chain: Aspartyl/glutamyl-tRNA(Asn/Gln) amidotransferase subunit C (102 aa).

The protein belongs to the GatC family. In terms of assembly, heterotrimer of A, B and C subunits.

It catalyses the reaction L-glutamyl-tRNA(Gln) + L-glutamine + ATP + H2O = L-glutaminyl-tRNA(Gln) + L-glutamate + ADP + phosphate + H(+). The enzyme catalyses L-aspartyl-tRNA(Asn) + L-glutamine + ATP + H2O = L-asparaginyl-tRNA(Asn) + L-glutamate + ADP + phosphate + 2 H(+). In terms of biological role, allows the formation of correctly charged Asn-tRNA(Asn) or Gln-tRNA(Gln) through the transamidation of misacylated Asp-tRNA(Asn) or Glu-tRNA(Gln) in organisms which lack either or both of asparaginyl-tRNA or glutaminyl-tRNA synthetases. The reaction takes place in the presence of glutamine and ATP through an activated phospho-Asp-tRNA(Asn) or phospho-Glu-tRNA(Gln). This Leuconostoc citreum (strain KM20) protein is Aspartyl/glutamyl-tRNA(Asn/Gln) amidotransferase subunit C.